Here is a 161-residue protein sequence, read N- to C-terminus: Phosphopantetheine adenylyltransferase (161 aa).

S11 contributes to the substrate binding site. Residues 11–12 (SF) and H19 each bind ATP. 3 residues coordinate substrate: K43, L75, and R89. ATP-binding positions include 90–92 (GLR), E100, and 125–131 (YSYLSSS).

The protein belongs to the bacterial CoaD family. As to quaternary structure, homohexamer. Requires Mg(2+) as cofactor.

It localises to the cytoplasm. It carries out the reaction (R)-4'-phosphopantetheine + ATP + H(+) = 3'-dephospho-CoA + diphosphate. It participates in cofactor biosynthesis; coenzyme A biosynthesis; CoA from (R)-pantothenate: step 4/5. Its function is as follows. Reversibly transfers an adenylyl group from ATP to 4'-phosphopantetheine, yielding dephospho-CoA (dPCoA) and pyrophosphate. This Geotalea daltonii (strain DSM 22248 / JCM 15807 / FRC-32) (Geobacter daltonii) protein is Phosphopantetheine adenylyltransferase.